A 556-amino-acid chain; its full sequence is Trigger factor (556 aa).

Positions 169–255 constitute a PPIase FKBP-type domain; that stretch reads GDVVVIDFAA…LREIKAKELP (87 aa). Over residues 438–452 the composition is skewed to polar residues; it reads VDSEGNPTQAPTSLA. The segment at 438 to 556 is disordered; it reads VDSEGNPTQA…KPSKKDKKGK (119 aa). The span at 461 to 472 shows a compositional bias: acidic residues; sequence PEAEFEADEPEA. Composition is skewed to low complexity over residues 486 to 503 and 511 to 526; these read ETAT…AEAE and EASP…AEAT.

Belongs to the FKBP-type PPIase family. Tig subfamily.

Its subcellular location is the cytoplasm. The enzyme catalyses [protein]-peptidylproline (omega=180) = [protein]-peptidylproline (omega=0). Its function is as follows. Involved in protein export. Acts as a chaperone by maintaining the newly synthesized protein in an open conformation. Functions as a peptidyl-prolyl cis-trans isomerase. This is Trigger factor from Synechococcus sp. (strain JA-2-3B'a(2-13)) (Cyanobacteria bacterium Yellowstone B-Prime).